Reading from the N-terminus, the 695-residue chain is Elongation factor G 1 (695 aa).

Positions 6–284 (SKVRNIGISA…AVETYLPCPT (279 aa)) constitute a tr-type G domain. Residues 15 to 22 (AHIDSGKT), 82 to 86 (DTPGH), and 136 to 139 (NKCD) each bind GTP.

It belongs to the TRAFAC class translation factor GTPase superfamily. Classic translation factor GTPase family. EF-G/EF-2 subfamily.

The protein localises to the cytoplasm. Functionally, catalyzes the GTP-dependent ribosomal translocation step during translation elongation. During this step, the ribosome changes from the pre-translocational (PRE) to the post-translocational (POST) state as the newly formed A-site-bound peptidyl-tRNA and P-site-bound deacylated tRNA move to the P and E sites, respectively. Catalyzes the coordinated movement of the two tRNA molecules, the mRNA and conformational changes in the ribosome. The sequence is that of Elongation factor G 1 from Desulfotalea psychrophila (strain LSv54 / DSM 12343).